The chain runs to 363 residues: Putative dipeptidase YkvY (363 aa).

Aspartate 222, aspartate 233, histidine 297, glutamate 326, and glutamate 340 together coordinate Mn(2+).

This sequence belongs to the peptidase M24B family. The cofactor is Mn(2+).

The chain is Putative dipeptidase YkvY (ykvY) from Bacillus subtilis (strain 168).